A 394-amino-acid chain; its full sequence is Elongation factor Tu (394 aa).

The 195-residue stretch at 10–204 (KPHVNIGTIG…AVDSYIPQPV (195 aa)) folds into the tr-type G domain. Positions 19–26 (GHVDHGKT) are G1. 19-26 (GHVDHGKT) is a GTP binding site. Residue T26 participates in Mg(2+) binding. The interval 60–64 (GITIS) is G2. The interval 81 to 84 (DCPG) is G3. GTP is bound by residues 81-85 (DCPGH) and 136-139 (NKID). The interval 136-139 (NKID) is G4. The segment at 174–176 (SAL) is G5.

The protein belongs to the TRAFAC class translation factor GTPase superfamily. Classic translation factor GTPase family. EF-Tu/EF-1A subfamily. In terms of assembly, monomer.

It is found in the cytoplasm. The enzyme catalyses GTP + H2O = GDP + phosphate + H(+). Functionally, GTP hydrolase that promotes the GTP-dependent binding of aminoacyl-tRNA to the A-site of ribosomes during protein biosynthesis. This is Elongation factor Tu from Rickettsia peacockii (strain Rustic).